Reading from the N-terminus, the 583-residue chain is Protein translocase subunit SecD (583 aa).

The next 6 helical transmembrane spans lie at 7–27 (FGVV…TLQW), 419–439 (LVWG…EAGV), 446–468 (LLNL…LSSI), 469–489 (AGMI…FERI), 511–531 (FWAI…LSVL), and 538–558 (GFAY…LFVS).

This sequence belongs to the SecD/SecF family. SecD subfamily. In terms of assembly, forms a complex with SecF. Part of the essential Sec protein translocation apparatus which comprises SecA, SecYEG and auxiliary proteins SecDF. Other proteins may also be involved.

It localises to the cell inner membrane. In terms of biological role, part of the Sec protein translocase complex. Interacts with the SecYEG preprotein conducting channel. SecDF uses the proton motive force (PMF) to complete protein translocation after the ATP-dependent function of SecA. The polypeptide is Protein translocase subunit SecD (Treponema pallidum (strain Nichols)).